We begin with the raw amino-acid sequence, 86 residues long: UPF0512 protein V (86 aa).

It belongs to the UPF0512 family.

This chain is UPF0512 protein V, found in Dictyostelium discoideum (Social amoeba).